A 305-amino-acid chain; its full sequence is Superkiller complex protein 8 (305 aa).

Met1 carries the N-acetylmethionine modification. Thr2 is subject to N-acetylthreonine; in WD repeat-containing protein 61, N-terminally processed. 7 WD repeats span residues 14–57 (AHDD…LELQ), 62–101 (GHQL…QMKS), 104–143 (AGPV…KEYS), 146–187 (TRGK…HTLE), 188–227 (GHAM…LAGT), 230–269 (GHAS…CIHT), and 272–305 (DHQD…DCPI).

Belongs to the SKI8 family. As to quaternary structure, component of the PAF1 complex, which consists of CDC73, PAF1, LEO1, CTR9, RTF1 and SKIC8. The PAF1 complex interacts with PHF5A. Within the PAF1 complex interacts directly with PHF5A. Component of the SKI complex which consists of SKIC2, SKIC3 and SKIC8.

The protein localises to the nucleus. Its subcellular location is the cytoplasm. In terms of biological role, component of the PAF1 complex (PAF1C) which has multiple functions during transcription by RNA polymerase II and is implicated in regulation of development and maintenance of embryonic stem cell pluripotency. PAF1C associates with RNA polymerase II through interaction with POLR2A CTD non-phosphorylated and 'Ser-2'- and 'Ser-5'-phosphorylated forms and is involved in transcriptional elongation, acting both independently and synergistically with TCEA1 and in cooperation with the DSIF complex and HTATSF1. PAF1C is required for transcription of Hox and Wnt target genes. PAF1C is involved in hematopoiesis and stimulates transcriptional activity of KMT2A/MLL1; it promotes leukemogenesis through association with KMT2A/MLL1-rearranged oncoproteins, such as KMT2A/MLL1-MLLT3/AF9 and KMT2A/MLL1-MLLT1/ENL. PAF1C is involved in histone modifications such as ubiquitination of histone H2B and methylation on histone H3 'Lys-4' (H3K4me3). PAF1C recruits the RNF20/40 E3 ubiquitin-protein ligase complex and the E2 enzyme UBE2A or UBE2B to chromatin which mediate monoubiquitination of 'Lys-120' of histone H2B (H2BK120ub1); UB2A/B-mediated H2B ubiquitination is proposed to be coupled to transcription. PAF1C is involved in mRNA 3' end formation probably through association with cleavage and poly(A) factors. In case of infection by influenza A strain H3N2, PAF1C associates with viral NS1 protein, thereby regulating gene transcription. Required for mono- and trimethylation on histone H3 'Lys-4' (H3K4me3), dimethylation on histone H3 'Lys-79' (H3K4me3). Required for Hox gene transcription. Also acts as a component of the SKI complex, a multiprotein complex that assists the RNA-degrading exosome during the mRNA decay and quality-control pathways. The SKI complex catalyzes mRNA extraction from 80S ribosomal complexes in the 3'-5' direction and channels mRNA to the cytosolic exosome for degradation. SKI-mediated extraction of mRNA from stalled ribosomes allow binding of the Pelota-HBS1L complex and subsequent ribosome disassembly by ABCE1 for ribosome recycling. The sequence is that of Superkiller complex protein 8 (Skic8) from Mus musculus (Mouse).